A 145-amino-acid polypeptide reads, in one-letter code: Transcriptional anti-antiactivator ExsC (145 aa).

In terms of assembly, homodimer. Interacts with ExsE. Interacts directly with ExsD to form a heterotetrameric complex.

Its subcellular location is the cytoplasm. Its activity is regulated as follows. In the absence of inducing signals, ExsE interacts with and inhibits ExsC activity. Part of the regulatory cascade that plays a role in the transcriptional regulation of the type III secretion system (T3SS). Interacts with antiactivator ExsD to inhibit its activity leading to ExsA-mediated transcription. The protein is Transcriptional anti-antiactivator ExsC (exsC) of Pseudomonas aeruginosa (strain ATCC 15692 / DSM 22644 / CIP 104116 / JCM 14847 / LMG 12228 / 1C / PRS 101 / PAO1).